The primary structure comprises 276 residues: MIEPSVEEFPAENGPQLTPELAIANLQSSDLSLRYYAAWWLGKYRVKESAAVDALIAALEDEADRTELGGYPLRRNAARALGKLGNRKAVPGLINCLECPDFYVREAAAQSLEMLKDKTAAPALIKLLDGGVAQAVQVTGRPHLVQPYEAVLEALGAIGATDAIPLIQPFLEHPVSRVQCAAARAMYQLTQEPVYGELLVKVLAGNDLNLRRVALGDLGAIGYLAAAEAIANAKAENSFKLIALKGLLEHQMSAESNALSISDQAIRVMNLMDSLL.

The protein belongs to the CpcE/RpcE/PecE family. CpcE and CpcF associate to form a lyase.

Its function is as follows. Required for the chromophorylation of the CpcA gene product. The polypeptide is Phycocyanobilin lyase subunit alpha (cpcE) (Nostoc sp. (strain PCC 7120 / SAG 25.82 / UTEX 2576)).